A 225-amino-acid polypeptide reads, in one-letter code: Ribonuclease 3 (225 aa).

Residues 5 to 127 (IDKLERKLGY…IIGAIYLDSD (123 aa)) enclose the RNase III domain. Residue E40 coordinates Mg(2+). Residue D44 is part of the active site. Mg(2+)-binding residues include D113 and E116. The active site involves E116. The 71-residue stretch at 154–224 (DPKTRLQEFL…AETALEQLTN (71 aa)) folds into the DRBM domain.

It belongs to the ribonuclease III family. Homodimer. Mg(2+) is required as a cofactor.

The protein localises to the cytoplasm. The enzyme catalyses Endonucleolytic cleavage to 5'-phosphomonoester.. Digests double-stranded RNA. Involved in the processing of primary rRNA transcript to yield the immediate precursors to the large and small rRNAs (23S and 16S). Processes some mRNAs, and tRNAs when they are encoded in the rRNA operon. Processes pre-crRNA and tracrRNA of type II CRISPR loci if present in the organism. The polypeptide is Ribonuclease 3 (Vibrio campbellii (strain ATCC BAA-1116)).